Here is a 342-residue protein sequence, read N- to C-terminus: S-adenosylmethionine:tRNA ribosyltransferase-isomerase (342 aa).

The protein belongs to the QueA family. In terms of assembly, monomer.

It localises to the cytoplasm. The catalysed reaction is 7-aminomethyl-7-carbaguanosine(34) in tRNA + S-adenosyl-L-methionine = epoxyqueuosine(34) in tRNA + adenine + L-methionine + 2 H(+). The protein operates within tRNA modification; tRNA-queuosine biosynthesis. In terms of biological role, transfers and isomerizes the ribose moiety from AdoMet to the 7-aminomethyl group of 7-deazaguanine (preQ1-tRNA) to give epoxyqueuosine (oQ-tRNA). The polypeptide is S-adenosylmethionine:tRNA ribosyltransferase-isomerase (Listeria innocua serovar 6a (strain ATCC BAA-680 / CLIP 11262)).